Reading from the N-terminus, the 208-residue chain is GTP cyclohydrolase-2 (208 aa).

49-53 (RLHSE) serves as a coordination point for GTP. 3 residues coordinate Zn(2+): C54, C65, and C67. GTP is bound by residues Q70, 92 to 94 (EGR), and T114. Catalysis depends on D126, which acts as the Proton acceptor. The active-site Nucleophile is the R128. Positions 149 and 154 each coordinate GTP.

Belongs to the GTP cyclohydrolase II family. Zn(2+) is required as a cofactor.

It carries out the reaction GTP + 4 H2O = 2,5-diamino-6-hydroxy-4-(5-phosphoribosylamino)-pyrimidine + formate + 2 phosphate + 3 H(+). It functions in the pathway cofactor biosynthesis; riboflavin biosynthesis; 5-amino-6-(D-ribitylamino)uracil from GTP: step 1/4. Functionally, catalyzes the conversion of GTP to 2,5-diamino-6-ribosylamino-4(3H)-pyrimidinone 5'-phosphate (DARP), formate and pyrophosphate. The chain is GTP cyclohydrolase-2 from Azotobacter vinelandii (strain DJ / ATCC BAA-1303).